We begin with the raw amino-acid sequence, 381 residues long: 8-amino-7-oxononanoate synthase (381 aa).

Arg27 contributes to the substrate binding site. 105–106 serves as a coordination point for pyridoxal 5'-phosphate; that stretch reads GY. His130 contacts substrate. Pyridoxal 5'-phosphate is bound by residues Ser176, 201 to 204, and 232 to 235; these read DEAH and TLSK. An N6-(pyridoxal phosphate)lysine modification is found at Lys235. Thr345 lines the substrate pocket.

This sequence belongs to the class-II pyridoxal-phosphate-dependent aminotransferase family. BioF subfamily. In terms of assembly, homodimer. Pyridoxal 5'-phosphate is required as a cofactor.

The enzyme catalyses 6-carboxyhexanoyl-[ACP] + L-alanine + H(+) = (8S)-8-amino-7-oxononanoate + holo-[ACP] + CO2. Its pathway is cofactor biosynthesis; biotin biosynthesis. In terms of biological role, catalyzes the decarboxylative condensation of pimeloyl-[acyl-carrier protein] and L-alanine to produce 8-amino-7-oxononanoate (AON), [acyl-carrier protein], and carbon dioxide. This is 8-amino-7-oxononanoate synthase from Mycolicibacterium paratuberculosis (strain ATCC BAA-968 / K-10) (Mycobacterium paratuberculosis).